Here is a 231-residue protein sequence, read N- to C-terminus: Phosphoribosylformylglycinamidine synthase subunit PurQ (231 aa).

The 225-residue stretch at 7 to 231 (GVVVFPGSNC…RLFASLFRQL (225 aa)) folds into the Glutamine amidotransferase type-1 domain. The active-site Nucleophile is Cys89. Residues His206 and Glu208 contribute to the active site.

As to quaternary structure, part of the FGAM synthase complex composed of 1 PurL, 1 PurQ and 2 PurS subunits.

It localises to the cytoplasm. The catalysed reaction is N(2)-formyl-N(1)-(5-phospho-beta-D-ribosyl)glycinamide + L-glutamine + ATP + H2O = 2-formamido-N(1)-(5-O-phospho-beta-D-ribosyl)acetamidine + L-glutamate + ADP + phosphate + H(+). The enzyme catalyses L-glutamine + H2O = L-glutamate + NH4(+). It functions in the pathway purine metabolism; IMP biosynthesis via de novo pathway; 5-amino-1-(5-phospho-D-ribosyl)imidazole from N(2)-formyl-N(1)-(5-phospho-D-ribosyl)glycinamide: step 1/2. Its function is as follows. Part of the phosphoribosylformylglycinamidine synthase complex involved in the purines biosynthetic pathway. Catalyzes the ATP-dependent conversion of formylglycinamide ribonucleotide (FGAR) and glutamine to yield formylglycinamidine ribonucleotide (FGAM) and glutamate. The FGAM synthase complex is composed of three subunits. PurQ produces an ammonia molecule by converting glutamine to glutamate. PurL transfers the ammonia molecule to FGAR to form FGAM in an ATP-dependent manner. PurS interacts with PurQ and PurL and is thought to assist in the transfer of the ammonia molecule from PurQ to PurL. This Chlorobium luteolum (strain DSM 273 / BCRC 81028 / 2530) (Pelodictyon luteolum) protein is Phosphoribosylformylglycinamidine synthase subunit PurQ.